A 318-amino-acid chain; its full sequence is Probable arabinan endo-1,5-alpha-L-arabinosidase C (318 aa).

The signal sequence occupies residues Met-1 to Ala-28. The Proton acceptor role is filled by Asp-30. 3 N-linked (GlcNAc...) asparagine glycosylation sites follow: Asn-72, Asn-80, and Asn-188. Glu-196 (proton donor) is an active-site residue. Asn-277 is a glycosylation site (N-linked (GlcNAc...) asparagine).

The protein belongs to the glycosyl hydrolase 43 family.

It localises to the secreted. It carries out the reaction Endohydrolysis of (1-&gt;5)-alpha-arabinofuranosidic linkages in (1-&gt;5)-arabinans.. Its pathway is glycan metabolism; L-arabinan degradation. Endo-1,5-alpha-L-arabinanase involved in degradation of pectin. Its preferred substrate is linear 1,5-alpha-L-arabinan. This Aspergillus niger (strain ATCC MYA-4892 / CBS 513.88 / FGSC A1513) protein is Probable arabinan endo-1,5-alpha-L-arabinosidase C (abnC).